Reading from the N-terminus, the 356-residue chain is Carminomycin 4-O-methyltransferase DnrK (356 aa).

R153 contacts S-adenosyl-L-methionine. D163 lines the substrate pocket. Residues G187, E210, 237–238, and S252 contribute to the S-adenosyl-L-methionine site; that span reads DF. Residues N257 and R303 each contribute to the substrate site.

It belongs to the class I-like SAM-binding methyltransferase superfamily. Cation-independent O-methyltransferase family. In terms of assembly, homodimer and homotetramer in equilibrium.

It catalyses the reaction carminomycin + S-adenosyl-L-methionine = daunorubicin + S-adenosyl-L-homocysteine + H(+). It functions in the pathway antibiotic biosynthesis; daunorubicin biosynthesis. It participates in antibiotic biosynthesis; carminomycin biosynthesis. Its function is as follows. Involved in the biosynthesis of the anthracyclines carminomycin and daunorubicin (daunomycin) which are aromatic polyketide antibiotics that exhibit high cytotoxicity and are widely applied in the chemotherapy of a variety of cancers. In vivo, catalyzes the transfer of a methyl group from S-adenosyl-L-methionine to the 4-O-position of carminomycin to form daunorubicin. In vitro, it also methylates the anthracyclines rhodomycin D (10-carbomethoxy-13-deoxycarminomycin) and 13-deoxy-carminomycin at the 4-hydroxyl position. It is quite specific with respect to the length of the carbohydrate chain at the C7 position, but it can accept substrates with bulky substituent at C10 position. This is Carminomycin 4-O-methyltransferase DnrK (dnrK) from Streptomyces peucetius.